We begin with the raw amino-acid sequence, 418 residues long: Serine hydroxymethyltransferase (418 aa).

(6S)-5,6,7,8-tetrahydrofolate-binding positions include Leu-120 and 124-126; that span reads GHL. Position 229 is an N6-(pyridoxal phosphate)lysine (Lys-229). A (6S)-5,6,7,8-tetrahydrofolate-binding site is contributed by 353-355; sequence SPF.

It belongs to the SHMT family. In terms of assembly, homodimer. Pyridoxal 5'-phosphate is required as a cofactor.

The protein resides in the cytoplasm. It catalyses the reaction (6R)-5,10-methylene-5,6,7,8-tetrahydrofolate + glycine + H2O = (6S)-5,6,7,8-tetrahydrofolate + L-serine. It participates in one-carbon metabolism; tetrahydrofolate interconversion. Its pathway is amino-acid biosynthesis; glycine biosynthesis; glycine from L-serine: step 1/1. Catalyzes the reversible interconversion of serine and glycine with tetrahydrofolate (THF) serving as the one-carbon carrier. This reaction serves as the major source of one-carbon groups required for the biosynthesis of purines, thymidylate, methionine, and other important biomolecules. Also exhibits THF-independent aldolase activity toward beta-hydroxyamino acids, producing glycine and aldehydes, via a retro-aldol mechanism. This is Serine hydroxymethyltransferase from Psychrobacter cryohalolentis (strain ATCC BAA-1226 / DSM 17306 / VKM B-2378 / K5).